We begin with the raw amino-acid sequence, 284 residues long: 4-hydroxybenzoate octaprenyltransferase (284 aa).

8 helical membrane passes run 14-34 (VHQP…LWIT), 41-61 (FIVL…GCVI), 93-113 (WVFF…NNII), 134-154 (YIYL…LIVY), 166-186 (WLLF…YAMV), 209-229 (IVIG…GIVE), 233-253 (IIFY…QQVL), and 262-282 (CLWA…GIVL).

This sequence belongs to the UbiA prenyltransferase family. Requires Mg(2+) as cofactor.

The protein resides in the cell inner membrane. It catalyses the reaction all-trans-octaprenyl diphosphate + 4-hydroxybenzoate = 4-hydroxy-3-(all-trans-octaprenyl)benzoate + diphosphate. It functions in the pathway cofactor biosynthesis; ubiquinone biosynthesis. In terms of biological role, catalyzes the prenylation of para-hydroxybenzoate (PHB) with an all-trans polyprenyl group. Mediates the second step in the final reaction sequence of ubiquinone-8 (UQ-8) biosynthesis, which is the condensation of the polyisoprenoid side chain with PHB, generating the first membrane-bound Q intermediate 3-octaprenyl-4-hydroxybenzoate. This chain is 4-hydroxybenzoate octaprenyltransferase, found in Blochmanniella floridana.